A 402-amino-acid chain; its full sequence is MAAGGGLSRSERKAAERVRRLREEQQRERLRQVSRILRKAAAERSAEEGRLLAESEDLVTELQGRSRRREGLKRRQEEVCDDPEELRRKVRELAGAVRSARHLVVYTGAGISTAASIPDYRGPNGVWTLLQKGRPVSAADLSEAEPTLTHMSITQLHKHKLVQHVVSQNCDGLHLRSGLPRTAISELHGNMYIEVCTSCIPNREYVRVFDVTERTALHRHLTGRTCHKCGTQLRDTIVHFGERGTLGQPLNWEAATEAASKADTILCLGSSLKVLKKYPRLWCMTKPPSRRPKLYIVNLQWTPKDDWAALKLHGKCDDVMRLLMDELGLEIPVYNRWQDPIFSLATPLRAGEEGSHSRKSLCRSREEPPPGDQSAPLASATPILGGWFGRGCAKRAKRKKAA.

Disordered regions lie at residues 1–25 and 59–78; these read MAAG…REEQ and VTEL…RQEE. The segment covering 9–25 has biased composition (basic and acidic residues); the sequence is RSERKAAERVRRLREEQ. The 248-residue stretch at 83 to 330 folds into the Deacetylase sirtuin-type domain; sequence PEELRRKVRE…RLLMDELGLE (248 aa). NAD(+) is bound by residues 108–127 and 168–171; these read GAGI…NGVW and QNCD. H188 functions as the Proton acceptor in the catalytic mechanism. 4 residues coordinate Zn(2+): C196, C199, C226, and C229. NAD(+) contacts are provided by residues 269–271, 298–300, and C316; these read GSS and NLQ. A disordered region spans residues 355–385; it reads SHSRKSLCRSREEPPPGDQSAPLASATPILG. Position 390 is an asymmetric dimethylarginine; alternate (R390). R390 is subject to Omega-N-methylarginine; alternate.

It belongs to the sirtuin family. Class IV subfamily. In terms of assembly, interacts with UBTF and the RNA polymerase I complex. Interacts with components of the B-WICH complex, such as MYBBP1A, SMARCA5/SNF2H and BAZ1B/WSTF. Interacts with ELK4, leading to stabilization at target promoters for H3K18Ac deacetylation. Interacts with histone H2A and/or histone H2B. Interacts with DNMT1. Interacts with SIRT1. The cofactor is Zn(2+). Post-translationally, phosphorylated during mitosis. Methylation at Arg-390 by PRMT6 inhibits the H3K18Ac histone deacetylase activity, promoting mitochondria biogenesis and maintaining mitochondria respiration. In terms of processing, ubiquitinated via 'Lys-63'-linked ubiquitin chains. Deubiquitinated by USP7, inhibiting the H3K18Ac histone deacetylase activity and regulating gluconeogenesis. Ubiquitinated by E3 ubiquitin-protein ligase complex containing FBXO7; leading to proteasomal degradation.

It is found in the nucleus. Its subcellular location is the nucleolus. It localises to the nucleoplasm. The protein resides in the chromosome. The protein localises to the cytoplasm. The enzyme catalyses N(6)-acetyl-L-lysyl-[protein] + NAD(+) + H2O = 2''-O-acetyl-ADP-D-ribose + nicotinamide + L-lysyl-[protein]. It catalyses the reaction N(6)-glutaryl-L-lysyl-[protein] + NAD(+) + H2O = 2''-O-glutaryl-ADP-D-ribose + nicotinamide + L-lysyl-[protein]. The catalysed reaction is N(6)-succinyl-L-lysyl-[protein] + NAD(+) + H2O = 2''-O-succinyl-ADP-D-ribose + nicotinamide + L-lysyl-[protein]. It carries out the reaction N(6)-propanoyl-L-lysyl-[protein] + NAD(+) + H2O = 3''-O-propanoyl-ADP-D-ribose + nicotinamide + L-lysyl-[protein]. The enzyme catalyses N(6)-decanoyl-L-lysyl-[protein] + NAD(+) + H2O = 2''-O-decanoyl-ADP-D-ribose + nicotinamide + L-lysyl-[protein]. With respect to regulation, NAD-dependent protein-lysine deacetylase and deacylase activities are activated by nucleic acids. Histone deacetylase activity is activated by DNA. Protein-lysine deacylase activity is activated by RNA. H3K18Ac histone deacetylase activity is inhibited by methylation at Arg-390. H3K18Ac histone deacetylase activity is inhibited by deubiquitination by USP7. Its function is as follows. NAD-dependent protein-lysine deacylase that can act both as a deacetylase or deacylase (desuccinylase, depropionylase, deglutarylase and dedecanoylase), depending on the context. Specifically mediates deacetylation of histone H3 at 'Lys-18' (H3K18Ac). In contrast to other histone deacetylases, displays strong preference for a specific histone mark, H3K18Ac, directly linked to control of gene expression. H3K18Ac is mainly present around the transcription start site of genes and has been linked to activation of nuclear hormone receptors; SIRT7 thereby acts as a transcription repressor. Moreover, H3K18 hypoacetylation has been reported as a marker of malignancy in various cancers and seems to maintain the transformed phenotype of cancer cells. Also able to mediate deacetylation of histone H3 at 'Lys-36' (H3K36Ac) in the context of nucleosomes. Also mediates deacetylation of non-histone proteins, such as ATM, CDK9, DDX21, DDB1, FBL, FKBP5/FKBP51, GABPB1, RAN, RRP9/U3-55K and POLR1E/PAF53. Enriched in nucleolus where it stimulates transcription activity of the RNA polymerase I complex. Acts by mediating the deacetylation of the RNA polymerase I subunit POLR1E/PAF53, thereby promoting the association of RNA polymerase I with the rDNA promoter region and coding region. In response to metabolic stress, SIRT7 is released from nucleoli leading to hyperacetylation of POLR1E/PAF53 and decreased RNA polymerase I transcription. Required to restore the transcription of ribosomal RNA (rRNA) at the exit from mitosis. Promotes pre-ribosomal RNA (pre-rRNA) cleavage at the 5'-terminal processing site by mediating deacetylation of RRP9/U3-55K, a core subunit of the U3 snoRNP complex. Mediates 'Lys-37' deacetylation of Ran, thereby regulating the nuclear export of NF-kappa-B subunit RELA/p65. Acts as a regulator of DNA damage repair by mediating deacetylation of ATM during the late stages of DNA damage response, promoting ATM dephosphorylation and deactivation. Suppresses the activity of the DCX (DDB1-CUL4-X-box) E3 ubiquitin-protein ligase complexes by mediating deacetylation of DDB1, which prevents the interaction between DDB1 and CUL4 (CUL4A or CUL4B). Activates RNA polymerase II transcription by mediating deacetylation of CDK9, thereby promoting 'Ser-2' phosphorylation of the C-terminal domain (CTD) of RNA polymerase II. Deacetylates FBL, promoting histone-glutamine methyltransferase activity of FBL. Acts as a regulator of mitochondrial function by catalyzing deacetylation of GABPB1. Regulates Akt/AKT1 activity by mediating deacetylation of FKBP5/FKBP51. Required to prevent R-loop-associated DNA damage and transcription-associated genomic instability by mediating deacetylation and subsequent activation of DDX21, thereby overcoming R-loop-mediated stalling of RNA polymerases. In addition to protein deacetylase activity, also acts as a protein-lysine deacylase. Acts as a protein depropionylase by mediating depropionylation of Osterix (SP7), thereby regulating bone formation by osteoblasts. Acts as a histone deglutarylase by mediating deglutarylation of histone H4 on 'Lys-91' (H4K91glu); a mark that destabilizes nucleosomes by promoting dissociation of the H2A-H2B dimers from nucleosomes. Acts as a histone desuccinylase: in response to DNA damage, recruited to DNA double-strand breaks (DSBs) and catalyzes desuccinylation of histone H3 on 'Lys-122' (H3K122succ), thereby promoting chromatin condensation and DSB repair. Also promotes DSB repair by promoting H3K18Ac deacetylation, regulating non-homologous end joining (NHEJ). Along with its role in DNA repair, required for chromosome synapsis during prophase I of female meiosis by catalyzing H3K18Ac deacetylation. Involved in transcriptional repression of LINE-1 retrotransposon via H3K18Ac deacetylation, and promotes their association with the nuclear lamina. Required to stabilize ribosomal DNA (rDNA) heterochromatin and prevent cellular senescence induced by rDNA instability. Acts as a negative regulator of SIRT1 by preventing autodeacetylation of SIRT1, restricting SIRT1 deacetylase activity. The sequence is that of NAD-dependent protein deacetylase sirtuin-7 from Rattus norvegicus (Rat).